The chain runs to 131 residues: Small ribosomal subunit protein uS9 (131 aa).

This sequence belongs to the universal ribosomal protein uS9 family.

This is Small ribosomal subunit protein uS9 from Actinobacillus pleuropneumoniae serotype 5b (strain L20).